Consider the following 121-residue polypeptide: Holo-[acyl-carrier-protein] synthase (121 aa).

Asp8 and Glu58 together coordinate Mg(2+).

The protein belongs to the P-Pant transferase superfamily. AcpS family. Requires Mg(2+) as cofactor.

The protein resides in the cytoplasm. The catalysed reaction is apo-[ACP] + CoA = holo-[ACP] + adenosine 3',5'-bisphosphate + H(+). Transfers the 4'-phosphopantetheine moiety from coenzyme A to a Ser of acyl-carrier-protein. The chain is Holo-[acyl-carrier-protein] synthase from Bacillus velezensis (strain DSM 23117 / BGSC 10A6 / LMG 26770 / FZB42) (Bacillus amyloliquefaciens subsp. plantarum).